A 202-amino-acid chain; its full sequence is NAD(P)H dehydrogenase (quinone) 2 (202 aa).

The 187-residue stretch at V4–V190 folds into the Flavodoxin-like domain. FMN-binding positions include S10–I15 and T78–F80. Residue Y12 participates in NAD(+) binding. Residue W98 coordinates substrate. Residues S113–G119 and H134 contribute to the FMN site.

It belongs to the WrbA family. Requires FMN as cofactor.

It catalyses the reaction a quinone + NADH + H(+) = a quinol + NAD(+). The enzyme catalyses a quinone + NADPH + H(+) = a quinol + NADP(+). In Rhizobium meliloti (strain 1021) (Ensifer meliloti), this protein is NAD(P)H dehydrogenase (quinone) 2.